Here is a 185-residue protein sequence, read N- to C-terminus: Acireductone dioxygenase (185 aa).

Positions 96, 98, 102, and 140 each coordinate Fe(2+). Positions 96, 98, 102, and 140 each coordinate Ni(2+).

Belongs to the acireductone dioxygenase (ARD) family. Monomer. Fe(2+) serves as cofactor. It depends on Ni(2+) as a cofactor.

The catalysed reaction is 1,2-dihydroxy-5-(methylsulfanyl)pent-1-en-3-one + O2 = 3-(methylsulfanyl)propanoate + CO + formate + 2 H(+). It carries out the reaction 1,2-dihydroxy-5-(methylsulfanyl)pent-1-en-3-one + O2 = 4-methylsulfanyl-2-oxobutanoate + formate + 2 H(+). Its pathway is amino-acid biosynthesis; L-methionine biosynthesis via salvage pathway; L-methionine from S-methyl-5-thio-alpha-D-ribose 1-phosphate: step 5/6. Its function is as follows. Catalyzes 2 different reactions between oxygen and the acireductone 1,2-dihydroxy-3-keto-5-methylthiopentene (DHK-MTPene) depending upon the metal bound in the active site. Fe-containing acireductone dioxygenase (Fe-ARD) produces formate and 2-keto-4-methylthiobutyrate (KMTB), the alpha-ketoacid precursor of methionine in the methionine recycle pathway. Ni-containing acireductone dioxygenase (Ni-ARD) produces methylthiopropionate, carbon monoxide and formate, and does not lie on the methionine recycle pathway. The chain is Acireductone dioxygenase from Hahella chejuensis (strain KCTC 2396).